A 180-amino-acid polypeptide reads, in one-letter code: Der GTPase-activating protein YihI (180 aa).

Disordered stretches follow at residues 1-87 and 142-180; these read MSRK…MTKQ and GLLEPEEEEDFTASSAKGSRNDDDLLADFDDINFDDYKG. Basic and acidic residues predominate over residues 23–32; it reads NRTESDVEGR. Residues 33-43 show a composition bias toward basic residues; sequence LRKRAKKRKGL. Over residues 51–68 the composition is skewed to basic and acidic residues; that stretch reads EVNEQKKQSSEQNRDPRL. Positions 165–180 are enriched in acidic residues; that stretch reads DLLADFDDINFDDYKG.

The protein belongs to the YihI family. As to quaternary structure, interacts with Der.

A GTPase-activating protein (GAP) that modifies Der/EngA GTPase function. May play a role in ribosome biogenesis. This is Der GTPase-activating protein YihI from Vibrio parahaemolyticus serotype O3:K6 (strain RIMD 2210633).